A 421-amino-acid polypeptide reads, in one-letter code: Membrane-associated protein UidC (421 aa).

The N-terminal stretch at 1–23 (MRKIVAMAVICLTAASGLTSAYA) is a signal peptide.

It belongs to the outer membrane porin (Opr) (TC 1.B.25) family.

The protein resides in the cell outer membrane. Functionally, enhances the activity of the UidB (GusB) glucuronide transporter, on its own however it has no transport activity. Glucuronide transport does not occur in strain K12 due to a variant at position 100 of the UidB (GusB, AC P0CE44, AC P0CE45) protein. This Escherichia coli (strain K12) protein is Membrane-associated protein UidC (uidC).